Consider the following 631-residue polypeptide: Phosphomethylpyrimidine synthase (631 aa).

The interval 54 to 80 (TLVGGDKDKPRYETNEPIPVYDTSGPY) is disordered. Basic and acidic residues predominate over residues 58-67 (GDKDKPRYET). Residues N239, M268, Y297, H333, 353–355 (SRG), 394–397 (DGLR), and E433 contribute to the substrate site. H437 serves as a coordination point for Zn(2+). Residue Y460 coordinates substrate. Residue H501 coordinates Zn(2+). [4Fe-4S] cluster-binding residues include C581, C584, and C589.

This sequence belongs to the ThiC family. Homodimer. Requires [4Fe-4S] cluster as cofactor.

It catalyses the reaction 5-amino-1-(5-phospho-beta-D-ribosyl)imidazole + S-adenosyl-L-methionine = 4-amino-2-methyl-5-(phosphooxymethyl)pyrimidine + CO + 5'-deoxyadenosine + formate + L-methionine + 3 H(+). It participates in cofactor biosynthesis; thiamine diphosphate biosynthesis. Catalyzes the synthesis of the hydroxymethylpyrimidine phosphate (HMP-P) moiety of thiamine from aminoimidazole ribotide (AIR) in a radical S-adenosyl-L-methionine (SAM)-dependent reaction. This Klebsiella pneumoniae subsp. pneumoniae (strain ATCC 700721 / MGH 78578) protein is Phosphomethylpyrimidine synthase.